We begin with the raw amino-acid sequence, 143 residues long: NADH-quinone oxidoreductase subunit A (143 aa).

A run of 3 helical transmembrane segments spans residues 8-28 (FGNVFVFLLLGVVFVAGGYLT), 63-83 (FYVVALIFIIFDVEVVFLFPW), and 93-113 (FALIEALVFAGILILGLVYAW).

This sequence belongs to the complex I subunit 3 family. NDH-1 is composed of 14 different subunits. Subunits NuoA, H, J, K, L, M, N constitute the membrane sector of the complex.

It is found in the cell inner membrane. It catalyses the reaction a quinone + NADH + 5 H(+)(in) = a quinol + NAD(+) + 4 H(+)(out). Its function is as follows. NDH-1 shuttles electrons from NADH, via FMN and iron-sulfur (Fe-S) centers, to quinones in the respiratory chain. The immediate electron acceptor for the enzyme in this species is believed to be a menaquinone. Couples the redox reaction to proton translocation (for every two electrons transferred, four hydrogen ions are translocated across the cytoplasmic membrane), and thus conserves the redox energy in a proton gradient. The protein is NADH-quinone oxidoreductase subunit A of Chlorobium luteolum (strain DSM 273 / BCRC 81028 / 2530) (Pelodictyon luteolum).